The following is a 337-amino-acid chain: Putative 4-hydroxythreonine-4-phosphate dehydrogenase (337 aa).

The a divalent metal cation site is built by histidine 172, histidine 216, and histidine 271.

The protein belongs to the PdxA family. Homodimer. Requires Zn(2+) as cofactor. It depends on Mg(2+) as a cofactor. The cofactor is Co(2+).

It localises to the cytoplasm. The catalysed reaction is 4-(phosphooxy)-L-threonine + NAD(+) = 3-amino-2-oxopropyl phosphate + CO2 + NADH. Its pathway is cofactor biosynthesis; pyridoxine 5'-phosphate biosynthesis; pyridoxine 5'-phosphate from D-erythrose 4-phosphate: step 4/5. In terms of biological role, catalyzes the NAD(P)-dependent oxidation of 4-(phosphooxy)-L-threonine (HTP) into 2-amino-3-oxo-4-(phosphooxy)butyric acid which spontaneously decarboxylates to form 3-amino-2-oxopropyl phosphate (AHAP). The polypeptide is Putative 4-hydroxythreonine-4-phosphate dehydrogenase (Pasteurella multocida (strain Pm70)).